A 90-amino-acid chain; its full sequence is MQRIIFCEYEKRDTEGLDFVPYPGELGQKIFACIGKVGWAAWLAHQTMLINENRLSPRNPSHRAFLEEELNKFLFERSAAKPEGYIEPDA.

This sequence belongs to the Fe(2+)-trafficking protein family.

In terms of biological role, could be a mediator in iron transactions between iron acquisition and iron-requiring processes, such as synthesis and/or repair of Fe-S clusters in biosynthetic enzymes. The protein is Probable Fe(2+)-trafficking protein of Xylella fastidiosa (strain M23).